The sequence spans 585 residues: Protein DENND6B (585 aa).

One can recognise a uDENN domain in the interval 43 to 214 (ECVCVVTFDL…LPVMGVVVQV (172 aa)). In terms of domain architecture, cDENN spans 246–373 (VHELDLFRCF…VKLKKPSRLK (128 aa)). The 125-residue stretch at 375 to 499 (LDTKPGLYTA…KSPHFDGWYR (125 aa)) folds into the dDENN domain.

It belongs to the DENND6 family.

The protein resides in the recycling endosome. It localises to the cytoplasm. In terms of biological role, guanine nucleotide exchange factor (GEF) for RAB14. Also has some, lesser GEF activity towards RAB35. In Homo sapiens (Human), this protein is Protein DENND6B (DENND6B).